The sequence spans 406 residues: Pyruvate dehydrogenase E1 component subunit beta-3, chloroplastic (406 aa).

The transit peptide at 1-70 (MSAILQGAGA…PLIPNAVTTK (70 aa)) directs the protein to the chloroplast. Glutamate 142 serves as a coordination point for thiamine diphosphate. The K(+) site is built by valine 195, alanine 243, isoleucine 244, and asparagine 248.

In terms of assembly, tetramer of 2 alpha and 2 beta subunits. The cofactor is thiamine diphosphate.

It is found in the plastid. It localises to the chloroplast. The catalysed reaction is N(6)-[(R)-lipoyl]-L-lysyl-[protein] + pyruvate + H(+) = N(6)-[(R)-S(8)-acetyldihydrolipoyl]-L-lysyl-[protein] + CO2. Its function is as follows. The pyruvate dehydrogenase complex catalyzes the overall conversion of pyruvate to acetyl-CoA and CO(2). It contains multiple copies of three enzymatic components: pyruvate dehydrogenase (E1), dihydrolipoamide acetyltransferase (E2) and lipoamide dehydrogenase (E3). The chain is Pyruvate dehydrogenase E1 component subunit beta-3, chloroplastic (E1-BETA-2) from Arabidopsis thaliana (Mouse-ear cress).